The chain runs to 351 residues: MISEDLLVEILLRLPVKPLARCLCVCKLWATIIRSRYFINLYQSRSSTRQPYVMFALRDIFTSCRWHFFSSSQPSLVTKATCSANNSSHTPDCVNGLICVEYMSQLWISNPATRKGVLVPQSAPHQKFRKWYMGYDPINYQYKVLFFSKQYLLSPYKLEVFTLEGQGSWKMIEVENIPSPSTRGICIDGVVYYGAQTAHGLRLVRFYVATEKFGDFIEIPVGASNVYDMNFGYSKLVNYQGKLALLAAKSMSMYDLWVLEDAGKQEWSKVSIVLTREMFSYDLVWLGAVGFVAGSDELIVTAHDRFYQIYLVYVDLKMKRSREVWLGGIRCSDRSSLVLTFTDYVESIMLL.

One can recognise an F-box domain in the interval 1-41; sequence MISEDLLVEILLRLPVKPLARCLCVCKLWATIIRSRYFINL.

The chain is Putative F-box protein At5g52610 from Arabidopsis thaliana (Mouse-ear cress).